Here is a 320-residue protein sequence, read N- to C-terminus: Cyclin-H (320 aa).

A Phosphoserine; by CDK8 modification is found at S5. Phosphoserine is present on S132. The residue at position 304 (S304) is a Phosphoserine; by CDK8.

The protein belongs to the cyclin family. Cyclin C subfamily. In terms of assembly, associates primarily with CDK7 and MAT1 to form the CAK complex. CAK can further associate with the core-TFIIH to form the TFIIH basal transcription factor.

It is found in the nucleus. Regulates CDK7, the catalytic subunit of the CDK-activating kinase (CAK) enzymatic complex. CAK activates the cyclin-associated kinases CDK1, CDK2, CDK4 and CDK6 by threonine phosphorylation. CAK complexed to the core-TFIIH basal transcription factor activates RNA polymerase II by serine phosphorylation of the repetitive C-terminal domain (CTD) of its large subunit (POLR2A), allowing its escape from the promoter and elongation of the transcripts. Involved in cell cycle control and in RNA transcription by RNA polymerase II. Its expression and activity are constant throughout the cell cycle. The protein is Cyclin-H (CCNH) of Bos taurus (Bovine).